The sequence spans 264 residues: Small ribosomal subunit protein eS1 (264 aa).

Lys34 is modified (N6-acetyllysine; alternate). Lys34 participates in a covalent cross-link: Glycyl lysine isopeptide (Lys-Gly) (interchain with G-Cter in SUMO2); alternate. The residue at position 56 (Lys56) is an N6-acetyllysine. ADP-ribosyltyrosine is present on Tyr155. Residues 233–264 (GEGGSSGKAAGDETGAKVERADGYEPPVQESV) form a disordered region. Ser237 is subject to Phosphoserine. The segment covering 242-255 (AGDETGAKVERADG) has biased composition (basic and acidic residues). Lys249 is modified (N6-acetyllysine; alternate). Residue Lys249 forms a Glycyl lysine isopeptide (Lys-Gly) (interchain with G-Cter in SUMO2); alternate linkage. Residue Tyr256 is modified to Phosphotyrosine. A Phosphoserine modification is found at Ser263.

This sequence belongs to the eukaryotic ribosomal protein eS1 family. As to quaternary structure, component of the small ribosomal subunit. Mature ribosomes consist of a small (40S) and a large (60S) subunit. The 40S subunit contains about 33 different proteins and 1 molecule of RNA (18S). The 60S subunit contains about 49 different proteins and 3 molecules of RNA (28S, 5.8S and 5S). Identified in a IGF2BP1-dependent mRNP granule complex containing untranslated mRNAs. Binds with high affinity to IPO4. Interacts with DDIT3. Part of the small subunit (SSU) processome, composed of more than 70 proteins and the RNA chaperone small nucleolar RNA (snoRNA) U3. In terms of processing, ADP-ribosylated at Tyr-155 by PARP1 in presence of HPF1.

It localises to the cytoplasm. Its subcellular location is the nucleus. The protein resides in the nucleolus. Functionally, component of the small ribosomal subunit. The ribosome is a large ribonucleoprotein complex responsible for the synthesis of proteins in the cell. Part of the small subunit (SSU) processome, first precursor of the small eukaryotic ribosomal subunit. During the assembly of the SSU processome in the nucleolus, many ribosome biogenesis factors, an RNA chaperone and ribosomal proteins associate with the nascent pre-rRNA and work in concert to generate RNA folding, modifications, rearrangements and cleavage as well as targeted degradation of pre-ribosomal RNA by the RNA exosome. May play a role during erythropoiesis through regulation of transcription factor DDIT3. The polypeptide is Small ribosomal subunit protein eS1 (Rps3a) (Mus musculus (Mouse)).